Reading from the N-terminus, the 389-residue chain is Chalcone synthase 6 (389 aa).

The active site involves cysteine 164.

It belongs to the thiolase-like superfamily. Chalcone/stilbene synthases family.

It carries out the reaction (E)-4-coumaroyl-CoA + 3 malonyl-CoA + 3 H(+) = 2',4,4',6'-tetrahydroxychalcone + 3 CO2 + 4 CoA. It participates in secondary metabolite biosynthesis; flavonoid biosynthesis. Functionally, the primary product of this enzyme is 4,2',4',6'-tetrahydroxychalcone (also termed naringenin-chalcone or chalcone) which can under specific conditions spontaneously isomerize into naringenin. The protein is Chalcone synthase 6 (CHS6) of Trifolium subterraneum (Subterranean clover).